The chain runs to 318 residues: L-lactate dehydrogenase (318 aa).

Residues Val-18, Asp-39, Lys-44, Tyr-69, and 83 to 84 (GA) contribute to the NAD(+) site. Gln-86 and Arg-92 together coordinate substrate. NAD(+)-binding positions include Ser-105, 122 to 124 (VSN), and Ser-147. 124-127 (NPVD) is a binding site for substrate. Residue 152-155 (DTSR) participates in substrate binding. The active-site Proton acceptor is His-179. Tyr-225 carries the phosphotyrosine modification. Thr-234 serves as a coordination point for substrate.

The protein belongs to the LDH/MDH superfamily. LDH family. Homotetramer.

It localises to the cytoplasm. It catalyses the reaction (S)-lactate + NAD(+) = pyruvate + NADH + H(+). It functions in the pathway fermentation; pyruvate fermentation to lactate; (S)-lactate from pyruvate: step 1/1. In terms of biological role, catalyzes the conversion of lactate to pyruvate. The chain is L-lactate dehydrogenase from Clostridium botulinum (strain Okra / Type B1).